We begin with the raw amino-acid sequence, 171 residues long: Secretion monitor (171 aa).

Positions 1-30 are cleaved as a signal peptide; that stretch reads MIGILNRWRQFGRRYFWPHLLLGMVAASLG.

This sequence belongs to the SecM family.

The protein localises to the cytoplasm. Its subcellular location is the cytosol. The protein resides in the periplasm. In terms of biological role, regulates secA expression by translational coupling of the secM secA operon. Translational pausing at a specific Pro residue 5 residues before the end of the protein may allow disruption of a mRNA repressor helix that normally suppresses secA translation initiation. The protein is Secretion monitor of Pectobacterium atrosepticum (strain SCRI 1043 / ATCC BAA-672) (Erwinia carotovora subsp. atroseptica).